A 967-amino-acid chain; its full sequence is Probable serine/threonine-protein kinase DDB_G0290621 (967 aa).

Disordered stretches follow at residues 65-122 (EDSD…KEKE), 215-251 (SSLS…SSSS), and 287-326 (QQQL…SPRT). Residues 66-94 (DSDEDDDDEEDEEDEEDSDEEEDDDVVED) are compositionally biased toward acidic residues. The span at 95-122 (DNTKDIGKSRDSDKSIKGKEKGKEKEKE) shows a compositional bias: basic and acidic residues. The span at 297–326 (QQQQQQQQQQQQQNNSMLQQSNNNNISPRT) shows a compositional bias: low complexity. The Protein kinase domain maps to 345–610 (FNDSNKIGEG…EIRSRLSEII (266 aa)). Residues 351 to 359 (IGEGGQCSI) and K368 contribute to the ATP site. D467 functions as the Proton acceptor in the catalytic mechanism. Disordered regions lie at residues 634-667 (DDSL…NNNN), 700-752 (STSN…NNNI), and 862-882 (TSSS…NPSN). A compositionally biased stretch (low complexity) spans 639–666 (NNNNNNNQNNNNQNNNNNNNNNNNNNNN). Low complexity predominate over residues 863-882 (SSSSNKNNNNNNNDNNNPSN).

The protein belongs to the protein kinase superfamily. TKL Ser/Thr protein kinase family.

The catalysed reaction is L-seryl-[protein] + ATP = O-phospho-L-seryl-[protein] + ADP + H(+). It carries out the reaction L-threonyl-[protein] + ATP = O-phospho-L-threonyl-[protein] + ADP + H(+). This is Probable serine/threonine-protein kinase DDB_G0290621 from Dictyostelium discoideum (Social amoeba).